The chain runs to 274 residues: Cytochrome c oxidase subunit 3 (274 aa).

Over 1–15 (MTHQTHAYHMVNPSP) the chain is Mitochondrial matrix. Residues 16–34 (WPLTGALSALLMTSGLAMW) form a helical membrane-spanning segment. At 35–40 (FHFNSS) the chain is on the mitochondrial intermembrane side. Residues 41–66 (MLLSLGMLTNLLTMYQWWRDIVREGT) form a helical membrane-spanning segment. At 67–72 (FQGHHT) the chain is on the mitochondrial matrix side. A helical transmembrane segment spans residues 73 to 105 (SIVQKGLRYGMVLFIISEIFFFAGFFWAFYHSS). Topologically, residues 106-128 (LAPTPELGGCWPPTGIHPLNPLE) are mitochondrial intermembrane. Residues 129–152 (VPLLNTAVLLASGVSITWAHHSLM) traverse the membrane as a helical segment. Residues 153 to 155 (EGN) are Mitochondrial matrix-facing. The helical transmembrane segment at 156-183 (RVQMLQALLITITLGLYFTLLQASEYFE) threads the bilayer. Residues 184–190 (TSFTISD) are Mitochondrial intermembrane-facing. The helical transmembrane segment at 191 to 223 (GVYGSTFFMATGFHGLHVIIGSTFLTVCFFRQL) threads the bilayer. The Mitochondrial matrix segment spans residues 224-232 (SFHFTSNHH). A helical membrane pass occupies residues 233–256 (FGFEAAAWYWHFVDVVWLFLYVSI). Topologically, residues 257 to 274 (YWWGSYSFSIDPMQLTSN) are mitochondrial intermembrane.

The protein belongs to the cytochrome c oxidase subunit 3 family. Component of the cytochrome c oxidase (complex IV, CIV), a multisubunit enzyme composed of 14 subunits. The complex is composed of a catalytic core of 3 subunits MT-CO1, MT-CO2 and MT-CO3, encoded in the mitochondrial DNA, and 11 supernumerary subunits COX4I, COX5A, COX5B, COX6A, COX6B, COX6C, COX7A, COX7B, COX7C, COX8 and NDUFA4, which are encoded in the nuclear genome. The complex exists as a monomer or a dimer and forms supercomplexes (SCs) in the inner mitochondrial membrane with NADH-ubiquinone oxidoreductase (complex I, CI) and ubiquinol-cytochrome c oxidoreductase (cytochrome b-c1 complex, complex III, CIII), resulting in different assemblies (supercomplex SCI(1)III(2)IV(1) and megacomplex MCI(2)III(2)IV(2)).

It localises to the mitochondrion inner membrane. It catalyses the reaction 4 Fe(II)-[cytochrome c] + O2 + 8 H(+)(in) = 4 Fe(III)-[cytochrome c] + 2 H2O + 4 H(+)(out). Component of the cytochrome c oxidase, the last enzyme in the mitochondrial electron transport chain which drives oxidative phosphorylation. The respiratory chain contains 3 multisubunit complexes succinate dehydrogenase (complex II, CII), ubiquinol-cytochrome c oxidoreductase (cytochrome b-c1 complex, complex III, CIII) and cytochrome c oxidase (complex IV, CIV), that cooperate to transfer electrons derived from NADH and succinate to molecular oxygen, creating an electrochemical gradient over the inner membrane that drives transmembrane transport and the ATP synthase. Cytochrome c oxidase is the component of the respiratory chain that catalyzes the reduction of oxygen to water. Electrons originating from reduced cytochrome c in the intermembrane space (IMS) are transferred via the dinuclear copper A center (CU(A)) of subunit 2 and heme A of subunit 1 to the active site in subunit 1, a binuclear center (BNC) formed by heme A3 and copper B (CU(B)). The BNC reduces molecular oxygen to 2 water molecules using 4 electrons from cytochrome c in the IMS and 4 protons from the mitochondrial matrix. This chain is Cytochrome c oxidase subunit 3 (MT-CO3), found in Lemur catta (Ring-tailed lemur).